The sequence spans 72 residues: Large ribosomal subunit protein uL29 (72 aa).

The protein belongs to the universal ribosomal protein uL29 family.

The chain is Large ribosomal subunit protein uL29 from Chlamydia caviae (strain ATCC VR-813 / DSM 19441 / 03DC25 / GPIC) (Chlamydophila caviae).